Consider the following 287-residue polypeptide: Phosphoribosylaminoimidazole-succinocarboxamide synthase (287 aa).

This sequence belongs to the SAICAR synthetase family.

The catalysed reaction is 5-amino-1-(5-phospho-D-ribosyl)imidazole-4-carboxylate + L-aspartate + ATP = (2S)-2-[5-amino-1-(5-phospho-beta-D-ribosyl)imidazole-4-carboxamido]succinate + ADP + phosphate + 2 H(+). The protein operates within purine metabolism; IMP biosynthesis via de novo pathway; 5-amino-1-(5-phospho-D-ribosyl)imidazole-4-carboxamide from 5-amino-1-(5-phospho-D-ribosyl)imidazole-4-carboxylate: step 1/2. This Neisseria meningitidis serogroup B (strain ATCC BAA-335 / MC58) protein is Phosphoribosylaminoimidazole-succinocarboxamide synthase.